A 361-amino-acid polypeptide reads, in one-letter code: Phosphoserine aminotransferase (361 aa).

Position 43 (Arg43) interacts with L-glutamate. Pyridoxal 5'-phosphate contacts are provided by residues 77 to 78, Trp103, Thr153, Asp173, and Gln196; that span reads AS. Lys197 carries the post-translational modification N6-(pyridoxal phosphate)lysine. Residue 238–239 participates in pyridoxal 5'-phosphate binding; it reads NT.

It belongs to the class-V pyridoxal-phosphate-dependent aminotransferase family. SerC subfamily. As to quaternary structure, homodimer. Requires pyridoxal 5'-phosphate as cofactor.

It localises to the cytoplasm. The enzyme catalyses O-phospho-L-serine + 2-oxoglutarate = 3-phosphooxypyruvate + L-glutamate. The catalysed reaction is 4-(phosphooxy)-L-threonine + 2-oxoglutarate = (R)-3-hydroxy-2-oxo-4-phosphooxybutanoate + L-glutamate. The protein operates within amino-acid biosynthesis; L-serine biosynthesis; L-serine from 3-phospho-D-glycerate: step 2/3. Its pathway is cofactor biosynthesis; pyridoxine 5'-phosphate biosynthesis; pyridoxine 5'-phosphate from D-erythrose 4-phosphate: step 3/5. Functionally, catalyzes the reversible conversion of 3-phosphohydroxypyruvate to phosphoserine and of 3-hydroxy-2-oxo-4-phosphonooxybutanoate to phosphohydroxythreonine. This Ectopseudomonas mendocina (strain ymp) (Pseudomonas mendocina) protein is Phosphoserine aminotransferase.